Here is a 70-residue protein sequence, read N- to C-terminus: MSKVMIFLIKFYQKAISPYLGQGKCKYYPTCSQYALEAFKKKPFFKALGLTIWRILRCNPFSKGGYDPLK.

Belongs to the UPF0161 family.

The protein resides in the cell membrane. Its function is as follows. Could be involved in insertion of integral membrane proteins into the membrane. This Finegoldia magna (strain ATCC 29328 / DSM 20472 / WAL 2508) (Peptostreptococcus magnus) protein is Putative membrane protein insertion efficiency factor.